A 78-amino-acid chain; its full sequence is ATP synthase subunit a (78 aa).

A helical transmembrane segment spans residues leucine 34–leucine 54.

It belongs to the ATPase A chain family. F-type ATPases have 2 components, CF(1) - the catalytic core - and CF(0) - the membrane proton channel. CF(1) has five subunits: alpha(3), beta(3), gamma(1), delta(1), epsilon(1). CF(0) has three main subunits: a, b and c.

Its subcellular location is the mitochondrion inner membrane. Functionally, mitochondrial membrane ATP synthase (F(1)F(0) ATP synthase or Complex V) produces ATP from ADP in the presence of a proton gradient across the membrane which is generated by electron transport complexes of the respiratory chain. F-type ATPases consist of two structural domains, F(1) - containing the extramembraneous catalytic core and F(0) - containing the membrane proton channel, linked together by a central stalk and a peripheral stalk. During catalysis, ATP synthesis in the catalytic domain of F(1) is coupled via a rotary mechanism of the central stalk subunits to proton translocation. Key component of the proton channel; it may play a direct role in the translocation of protons across the membrane. This is ATP synthase subunit a (atp6) from Aspergillus amstelodami.